The chain runs to 476 residues: Serine/threonine-protein kinase PBL36 (476 aa).

The 287-residue stretch at 126 to 412 folds into the Protein kinase domain; sequence FRPESLLGEG…VEALKPLPNL (287 aa). ATP is bound by residues 132 to 140 and Lys-164; that span reads LGEGGFGCV. Tyr-209 carries the phosphotyrosine modification. Residue Asp-259 is the Proton acceptor of the active site. A phosphoserine mark is found at Ser-263 and Ser-293. 2 positions are modified to phosphothreonine: Thr-294 and Thr-299. A Phosphotyrosine modification is found at Tyr-307. Residues 431-476 are disordered; that stretch reads NGVRTQGGGFVSRNGPPMRSLSSLNLPQASPYRYARQSPKPKGKEP.

The protein belongs to the protein kinase superfamily. Ser/Thr protein kinase family. Interacts with SD129. In terms of processing, phosphorylated by SD129 in response to the pathogen-associated molecular pattern (PAMP) 3-OH-C10:0, a medium-chain 3-hydroxy fatty acid.

The protein localises to the cell membrane. It carries out the reaction L-seryl-[protein] + ATP = O-phospho-L-seryl-[protein] + ADP + H(+). The enzyme catalyses L-threonyl-[protein] + ATP = O-phospho-L-threonyl-[protein] + ADP + H(+). Functionally, involved in chitin-triggered immune signaling and is required for reactive oxygen species (ROS) production. Acts downstream of SD129 in defense signaling triggered by the pathogen-associated molecular pattern (PAMP) 3-OH-C10:0, a medium-chain 3-hydroxy fatty acid. This chain is Serine/threonine-protein kinase PBL36, found in Arabidopsis thaliana (Mouse-ear cress).